We begin with the raw amino-acid sequence, 167 residues long: Ribosome maturation factor RimP (167 aa).

This sequence belongs to the RimP family.

The protein resides in the cytoplasm. Its function is as follows. Required for maturation of 30S ribosomal subunits. The protein is Ribosome maturation factor RimP of Streptomyces griseus subsp. griseus (strain JCM 4626 / CBS 651.72 / NBRC 13350 / KCC S-0626 / ISP 5235).